We begin with the raw amino-acid sequence, 475 residues long: Ribulose bisphosphate carboxylase large chain (475 aa).

Positions 1–2 (MS) are excised as a propeptide. Pro-3 is subject to N-acetylproline. At Lys-14 the chain carries N6,N6,N6-trimethyllysine. Residues Asn-123 and Thr-173 each coordinate substrate. Catalysis depends on Lys-175, which acts as the Proton acceptor. Residue Lys-177 coordinates substrate. Lys-201, Asp-203, and Glu-204 together coordinate Mg(2+). Lys-201 carries the post-translational modification N6-carboxylysine. His-294 functions as the Proton acceptor in the catalytic mechanism. Residues Arg-295, His-327, and Ser-379 each coordinate substrate.

The protein belongs to the RuBisCO large chain family. Type I subfamily. In terms of assembly, heterohexadecamer of 8 large chains and 8 small chains; disulfide-linked. The disulfide link is formed within the large subunit homodimers. Requires Mg(2+) as cofactor. The disulfide bond which can form in the large chain dimeric partners within the hexadecamer appears to be associated with oxidative stress and protein turnover.

The protein localises to the plastid. The protein resides in the chloroplast. It catalyses the reaction 2 (2R)-3-phosphoglycerate + 2 H(+) = D-ribulose 1,5-bisphosphate + CO2 + H2O. It carries out the reaction D-ribulose 1,5-bisphosphate + O2 = 2-phosphoglycolate + (2R)-3-phosphoglycerate + 2 H(+). In terms of biological role, ruBisCO catalyzes two reactions: the carboxylation of D-ribulose 1,5-bisphosphate, the primary event in carbon dioxide fixation, as well as the oxidative fragmentation of the pentose substrate in the photorespiration process. Both reactions occur simultaneously and in competition at the same active site. This chain is Ribulose bisphosphate carboxylase large chain, found in Corylus cornuta (Beaked hazel).